The sequence spans 466 residues: Soluble pyridine nucleotide transhydrogenase (466 aa).

36-45 (ERYHNIGGGC) provides a ligand contact to FAD.

It belongs to the class-I pyridine nucleotide-disulfide oxidoreductase family. FAD serves as cofactor.

The protein resides in the cytoplasm. The enzyme catalyses NAD(+) + NADPH = NADH + NADP(+). Its function is as follows. Conversion of NADPH, generated by peripheral catabolic pathways, to NADH, which can enter the respiratory chain for energy generation. This Erwinia tasmaniensis (strain DSM 17950 / CFBP 7177 / CIP 109463 / NCPPB 4357 / Et1/99) protein is Soluble pyridine nucleotide transhydrogenase.